A 139-amino-acid polypeptide reads, in one-letter code: Immunogenic miracidial antigen 8I' (139 aa).

A disordered region spans residues 61-139; that stretch reads IDVGDEDYHD…PKKYGSGYKH (79 aa). Positions 64 to 85 are enriched in acidic residues; sequence GDEDYHDGDDDVDYTDDVDDVD. Over residues 90-103 the composition is skewed to polar residues; the sequence is SPSQLLQGGYQRNQ.

The protein belongs to the immunogenic miracidial antigen family.

This is Immunogenic miracidial antigen 8I' (8I') from Schistosoma japonicum (Blood fluke).